A 189-amino-acid chain; its full sequence is Blue copper protein (189 aa).

An N-terminal signal peptide occupies residues 1-24; the sequence is MAFSNALVLCFLLAIINMALPSLA. The Phytocyanin domain occupies 25–124; the sequence is TVYTVGDTSG…GMKLSIKVKA (100 aa). The Cu cation site is built by H65, C106, and H111. Residues C78 and C106 are joined by a disulfide bond. Residues 127–160 show a composition bias toward low complexity; that stretch reads GSSAAPSATPSSSGKGSPSSDDTPAATTTTTTPT. The tract at residues 127–165 is disordered; it reads GSSAAPSATPSSSGKGSPSSDDTPAATTTTTTPTKQNES. The N-linked (GlcNAc...) asparagine glycan is linked to N163.

The polypeptide is Blue copper protein (Pisum sativum (Garden pea)).